Consider the following 105-residue polypeptide: Putative membrane protein insertion efficiency factor (105 aa).

Residues G76 to R105 form a disordered region. A compositionally biased stretch (basic and acidic residues) spans E90 to R105.

This sequence belongs to the UPF0161 family.

The protein resides in the cell inner membrane. Functionally, could be involved in insertion of integral membrane proteins into the membrane. The chain is Putative membrane protein insertion efficiency factor from Chromohalobacter salexigens (strain ATCC BAA-138 / DSM 3043 / CIP 106854 / NCIMB 13768 / 1H11).